Consider the following 541-residue polypeptide: MFSLQELCRKNIYILPYSLGKHVLQHLGLYWEKHGSLQRIGDDYVLLQQDLIFSVNEALRMAAEEGNNEVVKLLLLWEGNLHYAIIGALEGNRYDLIHKYYDQIGDCHKILPLIQDPQIFEKCHELSTSCNIRCLLEHAVKHNMLSILQKHKDQIRLHLALIQVLFELACREHKNDIVRWIGYSLYIHHLETIFDVALLHKNLSLYVLGYELLMHKVNTEAANIDVSDLLTQHLRSAAAGGLLHFMLETLKYGGCVDKTVLFAAISYKHRKIVAHFIHQVPRKTVEELLLHAVQTRAPKKTLNLLLSSLNYSVHTIIKQLVRSVAIYRSTLVVKLLLMRRKKKLNLIDAVLARLVKYCTYTDIVKFIREFSVSPERVIKMAARESRTFLIEMISKAAWRNDPQTMIHHLKQLTYTMKPESGKDLLIYMIHYIYQTSNLLVAEEEKNIFKLATFYAKHNSVNRFKQICEDYYALDVDARFKTLILECFEIAVQKNYPRIASIVDDFIRFLFYKGDITKEEISEAYSLKNAELYVDLKWLQQE.

The protein belongs to the asfivirus MGF 505 family.

In terms of biological role, plays a role in virus cell tropism, and may be required for efficient virus replication in macrophages. The polypeptide is Protein MGF 505-10R (Ornithodoros (relapsing fever ticks)).